The chain runs to 250 residues: Thermostable monoacylglycerol lipase (250 aa).

Phe29 is a substrate binding site. The active-site Nucleophile is the Ser97. Met98 is a binding site for substrate. Residues Asp196 and His226 each act as charge relay system in the active site.

This sequence belongs to the lipase/esterase LIP3/BchO family. In terms of assembly, monomer.

It catalyses the reaction Hydrolyzes glycerol monoesters of long-chain fatty acids.. Its activity is regulated as follows. Not inhibited by cholate, but slightly inhibited by triton X-100 and deoxycholate. Completely inhibited by PMSF (phenylmethylsulfonyl fluoride) at a concentration of 200 uM. Functionally, hydrolyzes monoacylglycerols, with the highest activity occurring with 1-monolauroylglycerol. The chain is Thermostable monoacylglycerol lipase from Bacillus sp. (strain H-257).